The following is a 340-amino-acid chain: Ketol-acid reductoisomerase (NADP(+)) (340 aa).

One can recognise a KARI N-terminal Rossmann domain in the interval 3–182 (VTMYYEDDVE…GCARVGIIET (180 aa)). NADP(+) is bound by residues 26-29 (YGSQ), Arg-49, Ser-53, and 83-86 (DELQ). Residue His-108 is part of the active site. An NADP(+)-binding site is contributed by Gly-134. Residues 183–328 (TFKEETEEDL…AELRKAMPFT (146 aa)) form the KARI C-terminal knotted domain. Mg(2+)-binding residues include Asp-191, Glu-195, Glu-227, and Glu-231. A substrate-binding site is contributed by Ser-252.

Belongs to the ketol-acid reductoisomerase family. Mg(2+) serves as cofactor.

It catalyses the reaction (2R)-2,3-dihydroxy-3-methylbutanoate + NADP(+) = (2S)-2-acetolactate + NADPH + H(+). The enzyme catalyses (2R,3R)-2,3-dihydroxy-3-methylpentanoate + NADP(+) = (S)-2-ethyl-2-hydroxy-3-oxobutanoate + NADPH + H(+). The protein operates within amino-acid biosynthesis; L-isoleucine biosynthesis; L-isoleucine from 2-oxobutanoate: step 2/4. It participates in amino-acid biosynthesis; L-valine biosynthesis; L-valine from pyruvate: step 2/4. Involved in the biosynthesis of branched-chain amino acids (BCAA). Catalyzes an alkyl-migration followed by a ketol-acid reduction of (S)-2-acetolactate (S2AL) to yield (R)-2,3-dihydroxy-isovalerate. In the isomerase reaction, S2AL is rearranged via a Mg-dependent methyl migration to produce 3-hydroxy-3-methyl-2-ketobutyrate (HMKB). In the reductase reaction, this 2-ketoacid undergoes a metal-dependent reduction by NADPH to yield (R)-2,3-dihydroxy-isovalerate. This Lactococcus lactis subsp. lactis (strain IL1403) (Streptococcus lactis) protein is Ketol-acid reductoisomerase (NADP(+)).